The sequence spans 108 residues: Protein phosphatase 1 regulatory subunit 1C (108 aa).

Positions 25-108 are disordered; that stretch reads AEQIRKRRPT…ASEREEKWNH (84 aa). Residues 45–54 show a composition bias toward basic and acidic residues; the sequence is NSPEIDEKRV. Over residues 55-73 the composition is skewed to polar residues; the sequence is TNTQESQNASPKQRKQSVY. Residues 99–108 are compositionally biased toward basic and acidic residues; sequence ASEREEKWNH.

This sequence belongs to the protein phosphatase inhibitor 1 family.

The protein localises to the cytoplasm. Its function is as follows. May increase cell susceptibility to TNF-induced apoptosis. The chain is Protein phosphatase 1 regulatory subunit 1C (Ppp1r1c) from Mus musculus (Mouse).